Reading from the N-terminus, the 194-residue chain is MYLAQIKAELQEAADVLDKFMSDEKNIQLIQDAALLISNSFKQGGKVLSCGNGGSHCDAMHFAEELTGRYRENRPGYPAIAISDVSHLSCVSNDFGYEYVFSRYLEAVGQKGDVLFGLSTSGNSKNVLNAIKVAKEKGMKVIAMTGKDGGQMAGLADVEIRVPHFRYADRTQEIHIKVIHILMMLIEFEMAKQA.

The SIS domain maps to 37-194; it reads ISNSFKQGGK…LIEFEMAKQA (158 aa). 52-54 is a binding site for substrate; it reads NGG. Residues histidine 61 and glutamate 65 each coordinate Zn(2+). Substrate is bound by residues glutamate 65, 93-94, 119-121, serine 124, and glutamine 172; these read ND and STS. Residues glutamine 172 and histidine 180 each contribute to the Zn(2+) site.

Belongs to the SIS family. GmhA subfamily. Homotetramer. The cofactor is Zn(2+).

Its subcellular location is the cytoplasm. The enzyme catalyses 2 D-sedoheptulose 7-phosphate = D-glycero-alpha-D-manno-heptose 7-phosphate + D-glycero-beta-D-manno-heptose 7-phosphate. It participates in carbohydrate biosynthesis; D-glycero-D-manno-heptose 7-phosphate biosynthesis; D-glycero-alpha-D-manno-heptose 7-phosphate and D-glycero-beta-D-manno-heptose 7-phosphate from sedoheptulose 7-phosphate: step 1/1. Its function is as follows. Catalyzes the isomerization of sedoheptulose 7-phosphate in D-glycero-D-manno-heptose 7-phosphate. The polypeptide is Phosphoheptose isomerase (Actinobacillus pleuropneumoniae serotype 5b (strain L20)).